The following is a 290-amino-acid chain: ATP synthase gamma chain (290 aa).

It belongs to the ATPase gamma chain family. As to quaternary structure, F-type ATPases have 2 components, CF(1) - the catalytic core - and CF(0) - the membrane proton channel. CF(1) has five subunits: alpha(3), beta(3), gamma(1), delta(1), epsilon(1). CF(0) has three main subunits: a, b and c.

The protein localises to the cell inner membrane. Produces ATP from ADP in the presence of a proton gradient across the membrane. The gamma chain is believed to be important in regulating ATPase activity and the flow of protons through the CF(0) complex. The polypeptide is ATP synthase gamma chain (Delftia acidovorans (strain DSM 14801 / SPH-1)).